Consider the following 507-residue polypeptide: FAD-linked oxidoreductase OXR1 (507 aa).

Positions 1–21 are cleaved as a signal peptide; the sequence is MTIKFASLILAGLGLGSGALG. Residues asparagine 34 and asparagine 65 are each glycosylated (N-linked (GlcNAc...) asparagine). Residues 73-245 form the FAD-binding PCMH-type domain; that stretch reads YAPPTFKVSV…VSATYKLKPL (173 aa). N-linked (GlcNAc...) asparagine glycosylation is found at asparagine 263 and asparagine 288.

Belongs to the oxygen-dependent FAD-linked oxidoreductase family. The cofactor is FAD.

The enzyme catalyses dihydropyriculol + A = pyriculol + AH2. It catalyses the reaction dihydropyriculariol + A = pyriculariol + AH2. Its pathway is polyketide biosynthesis. Functionally, FAD-linked oxidoreductase; part of the gene cluster that mediates the biosynthesis of pyriculol and pyriculariol, two heptaketides that induce lesion formation upon application on rice leaves but are dispensable for pathogenicity. The highly reducing polyketide synthase synthesizes the heptaketide backbone of pyriculol and pyriculariol. Pyriculol and pyriculariol contain several hydroxyl moieties and double bonds, so it can be assumed that several reduction steps occur during biosynthesis. These reactions could be executed by PKS19 itself or partly by the tailoring enzymes OXR1, OXR2, RED1, RED2 or RED3, identified within the cluster. The FAD-linked oxidoreductase OXR1 is the only tailoring enzyme for which the function has been determined yet, and is involved in the oxidation of dihydropyriculol and dihydropyriculariol into pyriculol and pyriculariol, respectively. The sequence is that of FAD-linked oxidoreductase OXR1 from Pyricularia oryzae (strain 70-15 / ATCC MYA-4617 / FGSC 8958) (Rice blast fungus).